A 514-amino-acid polypeptide reads, in one-letter code: 2-isopropylmalate synthase (514 aa).

A Pyruvate carboxyltransferase domain is found at Leu-5–Val-268. Residues Asp-14, His-202, His-204, and Asn-239 each contribute to the Mn(2+) site. The segment at Lys-395–Ser-514 is regulatory domain.

Belongs to the alpha-IPM synthase/homocitrate synthase family. LeuA type 1 subfamily. Homodimer. Mn(2+) is required as a cofactor.

It localises to the cytoplasm. The catalysed reaction is 3-methyl-2-oxobutanoate + acetyl-CoA + H2O = (2S)-2-isopropylmalate + CoA + H(+). The protein operates within amino-acid biosynthesis; L-leucine biosynthesis; L-leucine from 3-methyl-2-oxobutanoate: step 1/4. Catalyzes the condensation of the acetyl group of acetyl-CoA with 3-methyl-2-oxobutanoate (2-ketoisovalerate) to form 3-carboxy-3-hydroxy-4-methylpentanoate (2-isopropylmalate). This chain is 2-isopropylmalate synthase, found in Burkholderia ambifaria (strain MC40-6).